The chain runs to 901 residues: Protein translocase subunit SecA (901 aa).

ATP contacts are provided by residues Gln-87, 105-109 (GEGKT), and Asp-512. Zn(2+) is bound by residues Cys-885, Cys-887, Cys-896, and His-897.

It belongs to the SecA family. Monomer and homodimer. Part of the essential Sec protein translocation apparatus which comprises SecA, SecYEG and auxiliary proteins SecDF-YajC and YidC. It depends on Zn(2+) as a cofactor.

It is found in the cell inner membrane. The protein resides in the cytoplasm. It catalyses the reaction ATP + H2O + cellular proteinSide 1 = ADP + phosphate + cellular proteinSide 2.. Functionally, part of the Sec protein translocase complex. Interacts with the SecYEG preprotein conducting channel. Has a central role in coupling the hydrolysis of ATP to the transfer of proteins into and across the cell membrane, serving both as a receptor for the preprotein-SecB complex and as an ATP-driven molecular motor driving the stepwise translocation of polypeptide chains across the membrane. The sequence is that of Protein translocase subunit SecA from Salmonella enteritidis PT4 (strain P125109).